The chain runs to 172 residues: Nicotinamide-nucleotide adenylyltransferase (172 aa).

Belongs to the archaeal NMN adenylyltransferase family.

It localises to the cytoplasm. The catalysed reaction is beta-nicotinamide D-ribonucleotide + ATP + H(+) = diphosphate + NAD(+). It participates in cofactor biosynthesis; NAD(+) biosynthesis; NAD(+) from nicotinamide D-ribonucleotide: step 1/1. This Sulfurisphaera tokodaii (strain DSM 16993 / JCM 10545 / NBRC 100140 / 7) (Sulfolobus tokodaii) protein is Nicotinamide-nucleotide adenylyltransferase.